The sequence spans 476 residues: 4-(hydroxymethyl)benzenesulfonate dehydrogenase TsaD1 (476 aa).

Residues 154–155 (WN), 178–181 (KAAE), and 230–231 (GS) contribute to the NAD(+) site. Glutamate 252 (proton acceptor) is an active-site residue. Leucine 253 lines the NAD(+) pocket. The active-site Nucleophile is cysteine 286. Glutamate 380 is a binding site for NAD(+).

The protein belongs to the aldehyde dehydrogenase family. As to quaternary structure, homodimer.

The enzyme catalyses 4-(hydroxymethyl)benzenesulfonate + NAD(+) = 4-formylbenzenesulfonate + NADH + H(+). Its function is as follows. Involved in the toluene-4-sulfonate degradation pathway. Does not discriminate between the sulfonate and the carboxyl substituents and can also be involved in the p-toluenecarboxylate degradation pathway. This chain is 4-(hydroxymethyl)benzenesulfonate dehydrogenase TsaD1 (tsaD1), found in Comamonas testosteroni (Pseudomonas testosteroni).